The sequence spans 630 residues: tRNA uridine 5-carboxymethylaminomethyl modification enzyme MnmG (630 aa).

13–18 is an FAD binding site; that stretch reads GGGHAG. Residue 273-287 participates in NAD(+) binding; sequence GPRYCPSIEDKIHRF.

It belongs to the MnmG family. Homodimer. Heterotetramer of two MnmE and two MnmG subunits. FAD is required as a cofactor.

It localises to the cytoplasm. In terms of biological role, NAD-binding protein involved in the addition of a carboxymethylaminomethyl (cmnm) group at the wobble position (U34) of certain tRNAs, forming tRNA-cmnm(5)s(2)U34. The chain is tRNA uridine 5-carboxymethylaminomethyl modification enzyme MnmG from Pseudomonas putida (strain ATCC 700007 / DSM 6899 / JCM 31910 / BCRC 17059 / LMG 24140 / F1).